The sequence spans 410 residues: Cytochrome P450 105A3 (410 aa).

Cys359 is a heme binding site.

It belongs to the cytochrome P450 family. Monomer. The cofactor is heme.

Catalyzes the hydroxylation of sodium ML-236B carboxylate to pravastatin. This is Cytochrome P450 105A3 (cyp105A3) from Streptomyces carbophilus.